Consider the following 102-residue polypeptide: Putative pterin-4-alpha-carbinolamine dehydratase (102 aa).

The protein belongs to the pterin-4-alpha-carbinolamine dehydratase family.

It catalyses the reaction (4aS,6R)-4a-hydroxy-L-erythro-5,6,7,8-tetrahydrobiopterin = (6R)-L-erythro-6,7-dihydrobiopterin + H2O. The sequence is that of Putative pterin-4-alpha-carbinolamine dehydratase from Burkholderia cenocepacia (strain HI2424).